The chain runs to 373 residues: MTEPSRIQVRTADPYPVIIGRGLLGELVESVTGATSGVRTVAIFYQPPLAETAEVVRKALADTGIDAHRVEIPDAEAGKDLAVAGFCWEVLGRIGLTRNDVVVSLGGGAATDLAGFVAATWMRGVRIVHVPTTLLAMVDAAVGGKTGINTEAGKNLVGCFHEPTAVLVDLATLETVPRNEIVAGMAEIIKAGFIADPVILELVERDPQAALDPAGPVLPELIRRAIQVKADVVAADLKESSLREILNYGHTLGHAIERRERYRWRHGAAVAVGLVFAAELGRLAGRLDDATADRHRTILEAVGLPTTYDADALPQLLDAMQTDKKTRSGVLRFVVLDGLAKPGRLEGPDPSLLAAAYSAIAREESPSGGAILL.

NAD(+)-binding positions include 74-79 (DAEAGK), 108-112 (GAATD), 132-133 (TT), lysine 145, lysine 154, and 172-175 (TLET). The Zn(2+) site is built by glutamate 187, histidine 250, and histidine 266.

This sequence belongs to the sugar phosphate cyclases superfamily. Dehydroquinate synthase family. Co(2+) serves as cofactor. Requires Zn(2+) as cofactor. The cofactor is NAD(+).

Its subcellular location is the cytoplasm. It catalyses the reaction 7-phospho-2-dehydro-3-deoxy-D-arabino-heptonate = 3-dehydroquinate + phosphate. It functions in the pathway metabolic intermediate biosynthesis; chorismate biosynthesis; chorismate from D-erythrose 4-phosphate and phosphoenolpyruvate: step 2/7. Functionally, catalyzes the conversion of 3-deoxy-D-arabino-heptulosonate 7-phosphate (DAHP) to dehydroquinate (DHQ). The protein is 3-dehydroquinate synthase of Nocardia farcinica (strain IFM 10152).